The sequence spans 319 residues: tRNA uridine(34) hydroxylase (319 aa).

Residues Lys127–Glu221 enclose the Rhodanese domain. The Cysteine persulfide intermediate role is filled by Cys181.

The protein belongs to the TrhO family.

The enzyme catalyses uridine(34) in tRNA + AH2 + O2 = 5-hydroxyuridine(34) in tRNA + A + H2O. In terms of biological role, catalyzes oxygen-dependent 5-hydroxyuridine (ho5U) modification at position 34 in tRNAs. The chain is tRNA uridine(34) hydroxylase from Bacillus cereus (strain AH187).